Reading from the N-terminus, the 192-residue chain is tRNA (cytidine(56)-2'-O)-methyltransferase (192 aa).

S-adenosyl-L-methionine-binding positions include Leu-84 and 112–116 (GGEKV).

Belongs to the aTrm56 family. Homodimer.

It is found in the cytoplasm. The enzyme catalyses cytidine(56) in tRNA + S-adenosyl-L-methionine = 2'-O-methylcytidine(56) in tRNA + S-adenosyl-L-homocysteine + H(+). In terms of biological role, specifically catalyzes the AdoMet-dependent 2'-O-ribose methylation of cytidine at position 56 in tRNAs. The chain is tRNA (cytidine(56)-2'-O)-methyltransferase from Halobacterium salinarum (strain ATCC 700922 / JCM 11081 / NRC-1) (Halobacterium halobium).